The sequence spans 1024 residues: Multidrug resistance protein MdtC (1024 aa).

12 helical membrane-spanning segments follow: residues 12 to 32 (VATTLLTLAITLSGIIGFSLL), 333 to 353 (EVERSLVIAVALVILVVFIFL), 360 to 380 (LIPAVAVPVSLIGTFAAMYLC), 387 to 407 (LSLMALTIATGFVVDDAIVVL), 435 to 455 (VLSMSISLVAVFIPLLLMAGL), 469 to 489 (VAIGISLVISLTLTPMMCAWL), 528 to 548 (WVMVVLLSTIALNVWLYISIP), 853 to 873 (LWLIMAAIATVYIVLGILYES), 875 to 895 (VHPLTILSTLPSAGVGALLAL), 897 to 917 (LFDAPFSLIALIGIMLLIGIV), 953 to 973 (PIIMTTLAALFGALPLVLSSG), and 984 to 1004 (ITIVGGLVVSQLLTLYTTPVI).

The protein belongs to the resistance-nodulation-cell division (RND) (TC 2.A.6) family. MdtC subfamily. Part of a tripartite efflux system composed of MdtA, MdtB and MdtC. MdtC forms a heteromultimer with MdtB.

Its subcellular location is the cell inner membrane. In Yersinia pestis bv. Antiqua (strain Antiqua), this protein is Multidrug resistance protein MdtC.